A 171-amino-acid polypeptide reads, in one-letter code: MRTPLLLQSLKTRVAALHTLIGPLASQRHFSPRFDRQLFACRGARLGDYLTEAEESLTHLEAAVNQGDATRVAWLAERLAAQIEALQREAATATLRRHENAHLPGGRLHARLAEYQEYERRLLAMKNEREQRYAERHDPQLAREITALDERLTRCRTAIARTERALERITR.

It belongs to the PriC family. As to quaternary structure, monomer. Component of the replication restart primosome, which is composed of PriA, PriB, PriC, DnaBe and DnaT; DnaG primase associates transiently with this complex. Interacts with the C-terminus of SSB. SSB interaction is required to load the main replicative helicase onto substrate replication forks. Interacts with helicase DnaB alone and in the DnaB-DnaC complex, probably 1:1 binding with DnaB.

Involved in the restart of stalled replication forks, which reloads the DnaB replicative helicase on sites other than the origin of replication. In vitro can load (E.coli) DnaB replicative helicase from a DnaB-DnaC complex on a single-stranded DNA (ssDNA)-binding protein (SSB)-coated stalled replication fork with no leading- or lagging-strand in the absence of other primosome proteins (PriA, PriB or DnaT). Binds SSB (tested with E.coli protein) and ssDNA. Complements priC in an E.coli priB-priC double deletion. This chain is Replication restart protein PriC, found in Cronobacter sakazakii (strain ATCC BAA-894) (Enterobacter sakazakii).